A 492-amino-acid polypeptide reads, in one-letter code: GPI alpha-1,6-mannosyltransferase 2 (492 aa).

The Cytoplasmic portion of the chain corresponds to 1-13 (MGLLDPSQKEVLK). The helical transmembrane segment at 14 to 34 (FAVSCRILTLVLQALFNIIIP) threads the bilayer. Residues 35-77 (DHHADAFSPPRLAPSGSVDQLVEALLGGLSRWDAEHFLFIAEH) lie on the Lumenal side of the membrane. A helical transmembrane segment spans residues 78 to 98 (GYLYEHNFAFFPGFPLALLMG). The Cytoplasmic segment spans residues 99 to 113 (TELLRPLQGLLSERS). A helical membrane pass occupies residues 114–134 (CLLVSVALLNSLFSVLAAVAL). Topologically, residues 135–136 (HD) are lumenal. Residues 137-157 (LGCLVLHCPRQAFCAALLFCL) form a helical membrane-spanning segment. At 158–161 (SPAN) the chain is on the cytoplasmic side. A helical membrane pass occupies residues 162 to 182 (VFLAAGYSEALFAFLTFSAMG). Topologically, residues 183 to 192 (QLERGRGWAS) are lumenal. The helical transmembrane segment at 193–213 (GLLFALAAGVRSNGLVSVGFL) threads the bilayer. Residues 214–234 (LHSQCRGFCSSLVVLDPLKGL) are Cytoplasmic-facing. The chain crosses the membrane as a helical span at residues 235 to 255 (VKLMASLCLSVLTVSLPFALF). Residues 256-327 (QYYAYTQFCF…RYYELRQVPN (72 aa)) are Lumenal-facing. A helical transmembrane segment spans residues 328–348 (FLLATPVTVLVVWATWTYVTA). The Cytoplasmic segment spans residues 349–378 (HPWLCLTLGLQRTKDRESLEKPHPGFLSAK). Residues 379 to 399 (VFVYLVHAAALLAFGGLCMHV) form a helical membrane-spanning segment. Topologically, residues 400–468 (QVLTRLLGSS…NWKTCSPVTK (69 aa)) are lumenal. The helical transmembrane segment at 469–489 (CILVYFLTYWLLGLIMHCNFL) threads the bilayer. Residues 490-492 (PWT) are Cytoplasmic-facing.

This sequence belongs to the PIGV family. Post-translationally, not N-glycosylated.

It is found in the endoplasmic reticulum membrane. It participates in glycolipid biosynthesis; glycosylphosphatidylinositol-anchor biosynthesis. Its function is as follows. Alpha-1,6-mannosyltransferase that catalyzes the transfer of the second mannose, via an alpha-1,6 bond, from a dolichol-phosphate-mannose (Dol-P-Man) to the alpha-D-Man-(1-&gt;4)-alpha-D-GlcN-(1-&gt;6)-(1-radyl,2-acyl-sn-glycero-3-phospho)-2-acyl-inositol (also termed H2) intermediate to generate an alpha-D-Man-(1-&gt;6)-alpha-D-Man-(1-&gt;4)-alpha-D-GlcN-(1-&gt;6)-(1-radyl,2-acyl-sn-glycero-3-phospho)-2-acyl-inositol (also termed H3) and participates in the seventh step of the glycosylphosphatidylinositol-anchor biosynthesis. Also transfers the second mannose on a 2-PEtn-alpha-D-Man-(1-&gt;4)-alpha-D-GlcN-(1-&gt;6)-(1-radyl,2-acyl-sn-glycero-3-phospho)-2-acyl-inositol (also termed H5). In Rattus norvegicus (Rat), this protein is GPI alpha-1,6-mannosyltransferase 2.